A 670-amino-acid chain; its full sequence is DNA ligase (670 aa).

NAD(+)-binding positions include 32–36 (DAEYD), 81–82 (SL), and Glu110. Lys112 acts as the N6-AMP-lysine intermediate in catalysis. Residues Arg133, Glu170, Lys289, and Lys313 each contribute to the NAD(+) site. Zn(2+)-binding residues include Cys407, Cys410, Cys425, and Cys431. Residues 590-670 (ESQLSLKGQT…ALMDLLNAAN (81 aa)) enclose the BRCT domain.

The protein belongs to the NAD-dependent DNA ligase family. LigA subfamily. Mg(2+) serves as cofactor. Mn(2+) is required as a cofactor.

The enzyme catalyses NAD(+) + (deoxyribonucleotide)n-3'-hydroxyl + 5'-phospho-(deoxyribonucleotide)m = (deoxyribonucleotide)n+m + AMP + beta-nicotinamide D-nucleotide.. Functionally, DNA ligase that catalyzes the formation of phosphodiester linkages between 5'-phosphoryl and 3'-hydroxyl groups in double-stranded DNA using NAD as a coenzyme and as the energy source for the reaction. It is essential for DNA replication and repair of damaged DNA. The protein is DNA ligase of Shewanella frigidimarina (strain NCIMB 400).